The sequence spans 415 residues: 3-oxoacyl-[acyl-carrier-protein] synthase 2 (415 aa).

A Ketosynthase family 3 (KS3) domain is found at 3–412; that stretch reads KRRVVVTGMG…GTNGSLVFKK (410 aa). Catalysis depends on for beta-ketoacyl synthase activity residues cysteine 164, histidine 304, and histidine 342.

The protein belongs to the thiolase-like superfamily. Beta-ketoacyl-ACP synthases family. In terms of assembly, homodimer.

The catalysed reaction is a fatty acyl-[ACP] + malonyl-[ACP] + H(+) = a 3-oxoacyl-[ACP] + holo-[ACP] + CO2. It catalyses the reaction (9Z)-hexadecenoyl-[ACP] + malonyl-[ACP] + H(+) = 3-oxo-(11Z)-octadecenoyl-[ACP] + holo-[ACP] + CO2. It functions in the pathway lipid metabolism; fatty acid biosynthesis. Its function is as follows. Involved in the type II fatty acid elongation cycle. Catalyzes the elongation of a wide range of acyl-ACP by the addition of two carbons from malonyl-ACP to an acyl acceptor. Can efficiently catalyze the conversion of palmitoleoyl-ACP (cis-hexadec-9-enoyl-ACP) to cis-vaccenoyl-ACP (cis-octadec-11-enoyl-ACP), an essential step in the thermal regulation of fatty acid composition. In Vibrio harveyi (Beneckea harveyi), this protein is 3-oxoacyl-[acyl-carrier-protein] synthase 2 (fabF).